The primary structure comprises 64 residues: Sperm protamine P1 (64 aa).

A disordered region spans residues 1 to 64 (MVRYRRHSRS…QSRRRRRRRY (64 aa)).

The protein belongs to the protamine P1 family. As to expression, testis.

It localises to the nucleus. The protein localises to the chromosome. Protamines substitute for histones in the chromatin of sperm during the haploid phase of spermatogenesis. They compact sperm DNA into a highly condensed, stable and inactive complex. The chain is Sperm protamine P1 (PRM1) from Dromiciops gliroides (Monito del Monte).